Consider the following 429-residue polypeptide: Enolase (429 aa).

(2R)-2-phosphoglycerate is bound at residue Gln-164. Glu-206 (proton donor) is an active-site residue. Mg(2+) is bound by residues Asp-243, Glu-286, and Asp-313. Residues Lys-338, Arg-367, Ser-368, and Lys-389 each coordinate (2R)-2-phosphoglycerate. The active-site Proton acceptor is the Lys-338.

It belongs to the enolase family. Mg(2+) serves as cofactor.

The protein resides in the cytoplasm. Its subcellular location is the secreted. It is found in the cell surface. The enzyme catalyses (2R)-2-phosphoglycerate = phosphoenolpyruvate + H2O. Its pathway is carbohydrate degradation; glycolysis; pyruvate from D-glyceraldehyde 3-phosphate: step 4/5. Its function is as follows. Catalyzes the reversible conversion of 2-phosphoglycerate (2-PG) into phosphoenolpyruvate (PEP). It is essential for the degradation of carbohydrates via glycolysis. The sequence is that of Enolase from Thermosipho melanesiensis (strain DSM 12029 / CIP 104789 / BI429).